We begin with the raw amino-acid sequence, 163 residues long: Nucleotide-binding protein YajQ (163 aa).

Belongs to the YajQ family.

Functionally, nucleotide-binding protein. The protein is Nucleotide-binding protein YajQ of Salmonella typhi.